The primary structure comprises 135 residues: Large ribosomal subunit protein bL12c (135 aa).

Belongs to the bacterial ribosomal protein bL12 family. In terms of assembly, homodimer. Part of the ribosomal stalk of the 50S ribosomal subunit. Forms a multimeric L10(L12)X complex, where L10 forms an elongated spine to which 2 to 4 L12 dimers bind in a sequential fashion. Binds GTP-bound translation factors.

The protein resides in the plastid. The protein localises to the chloroplast. Its function is as follows. Forms part of the ribosomal stalk which helps the ribosome interact with GTP-bound translation factors. Is thus essential for accurate translation. The sequence is that of Large ribosomal subunit protein bL12c from Chara vulgaris (Common stonewort).